The primary structure comprises 552 residues: MGGNMSRVVKAPTGNKMVCKGWLQEAAYRMIQNNLDPVIAEHPENLVVYGGIGKAARNWESFDKILEALKELENDETLLVQSGKPIGILKTHEDAPRVLLANSNLVPKWATWEHFNELDKKGLMMYGQMTAGSWIYIGTQGIIQGTYESFVEAGRQHFGGNLTGRVILTAGLGGMGGAQPLAGVFAGACVLAVEIDPTRIQKRLETKYVDEVATDLDDALARIKKYTAAGEAKSIALQGNMATVIHQLIEKNFTPDLLTDQTSAHDPLVGYIPEGYTVETAKTFREQDQKAYLKAAYDSMAKHVRGMLAMKDRGAVTFDYGNNLRARAQEAGVENAFDYPGFVPAFIRPLFCKGSGPFRWVALSGDPNDIKVTDDAMRKLFPHKKDLLRWLDMAEERIAFQGLPARICWLEYGERAKAGLMFNQLVAEGKVKAPIVIGRDHLDCGSVASPNRETEAMKDGSDAVSDWALLNALVNTACGATWVSLHHGGGVGMGYSQHAGQVIVADGTEKAARRLERVLTADPAMGVFRHLDAGYELAHDIAKERGVRSLWL.

Residues 50 to 51, Q128, 174 to 176, E194, R199, 261 to 265, 271 to 272, and Y320 each bind NAD(+); these read GG, GMG, QTSAH, and YI. C408 is a catalytic residue. G490 serves as a coordination point for NAD(+).

This sequence belongs to the urocanase family. The cofactor is NAD(+).

It localises to the cytoplasm. It carries out the reaction 4-imidazolone-5-propanoate = trans-urocanate + H2O. Its pathway is amino-acid degradation; L-histidine degradation into L-glutamate; N-formimidoyl-L-glutamate from L-histidine: step 2/3. Functionally, catalyzes the conversion of urocanate to 4-imidazolone-5-propionate. This Bdellovibrio bacteriovorus (strain ATCC 15356 / DSM 50701 / NCIMB 9529 / HD100) protein is Urocanate hydratase.